A 283-amino-acid chain; its full sequence is Nickel/cobalt efflux system RcnA (283 aa).

Over 1–12 (MTEFTTLLQQGN) the chain is Periplasmic. The helical transmembrane segment at 13 to 33 (AWFFIPSAILLGALHGLEPGH) threads the bilayer. The Cytoplasmic segment spans residues 34-56 (SKTMMAAFIIAIKGTIKQAVMLG). The chain crosses the membrane as a helical span at residues 57-77 (LAATISHTAVVWLIAFGGMVI). The Periplasmic portion of the chain corresponds to 78–86 (SKRFTAQSA). Residues 87 to 107 (EPWLQLISAVIIISTAFWMFW) traverse the membrane as a helical segment. Topologically, residues 108 to 184 (RTWRGERNWL…DGREVTNWQI (77 aa)) are cytoplasmic. Positions 127 to 162 (DHEHHQDHDHDHDHDHDHEHHHHHEHGDNEEYQDAH) are disordered. 2 stretches are compositionally biased toward basic and acidic residues: residues 129-144 (EHHQDHDHDHDHDHDH) and 151-162 (EHGDNEEYQDAH). A helical transmembrane segment spans residues 185–205 (LLFGLTGGLIPCPAAITVLLI). Residues 206 to 218 (CIQLKALTLGATL) are Periplasmic-facing. The chain crosses the membrane as a helical span at residues 219-239 (VVSFSIGLALTLVTVGVGAAI). Over 240–260 (SVQQVAKRWSGFNTLAKRAPY) the chain is Cytoplasmic. Residues 261–281 (FSSLLIGLVGVYMGVHGFMGI) form a helical membrane-spanning segment. The Periplasmic portion of the chain corresponds to 282–283 (MR).

It belongs to the NiCoT transporter (TC 2.A.52) family. RcnA subfamily.

The protein resides in the cell inner membrane. Efflux system for nickel and cobalt. This Escherichia coli O157:H7 protein is Nickel/cobalt efflux system RcnA (rcnA).